Reading from the N-terminus, the 345-residue chain is MLGALADGRDLSAADTAWAMNEIMSDNATSAQIAAFGVAIKIKGPTPEELGGLATGMFEHARLVSIDGDAVDIVGTGGDRSGSVNISTMSSIVVAAAGVPVVKHGNRAASSKSGGADVLEALGVRLNLGPEAVARCVREVGIGFCFAPVFHPALRFAGAARREIGIPTVFNILGPLTNPARPRAGLVGCAFPELLEVVAGVFAERGASALVVRGADGLDEITTSDVTDTWVVSGGRMRRTTIDPTRLGIARVDLDALRGGDAEVNAGVARSVFAGTAGAVRDAVLVNSAAAIVAYDLSRGVGDPDADVHDALAAGMARAAAAIDGGQAAALLERWAKLSNTLGDR.

Residues Gly-75, 78–79 (GD), Ser-83, 85–88 (NIST), 103–111 (KHGNRAASS), and Gly-115 each bind 5-phospho-alpha-D-ribose 1-diphosphate. Gly-75 lines the anthranilate pocket. Ser-87 lines the Mg(2+) pocket. Asn-106 is an anthranilate binding site. Arg-161 is an anthranilate binding site. Mg(2+)-binding residues include Asp-219 and Glu-220.

It belongs to the anthranilate phosphoribosyltransferase family. Homodimer. Mg(2+) serves as cofactor.

The catalysed reaction is N-(5-phospho-beta-D-ribosyl)anthranilate + diphosphate = 5-phospho-alpha-D-ribose 1-diphosphate + anthranilate. The protein operates within amino-acid biosynthesis; L-tryptophan biosynthesis; L-tryptophan from chorismate: step 2/5. Its function is as follows. Catalyzes the transfer of the phosphoribosyl group of 5-phosphorylribose-1-pyrophosphate (PRPP) to anthranilate to yield N-(5'-phosphoribosyl)-anthranilate (PRA). The polypeptide is Anthranilate phosphoribosyltransferase (Nocardia farcinica (strain IFM 10152)).